The primary structure comprises 1217 residues: ATP-dependent helicase/nuclease subunit A (1217 aa).

Residues 10 to 475 form the UvrD-like helicase ATP-binding domain; that stretch reads VIWTDAQWQS…IDLSQNFRSR (466 aa). An ATP-binding site is contributed by 31–38; the sequence is AAAGSGKT. One can recognise a UvrD-like helicase C-terminal domain in the interval 476-786; that stretch reads KEVLSTTNYI…RMMTIHSSKG (311 aa).

It belongs to the helicase family. AddA subfamily. As to quaternary structure, heterodimer of AddA and AddB/RexB. Mg(2+) is required as a cofactor.

It catalyses the reaction Couples ATP hydrolysis with the unwinding of duplex DNA by translocating in the 3'-5' direction.. The enzyme catalyses ATP + H2O = ADP + phosphate + H(+). Functionally, the heterodimer acts as both an ATP-dependent DNA helicase and an ATP-dependent, dual-direction single-stranded exonuclease. Recognizes the chi site generating a DNA molecule suitable for the initiation of homologous recombination. The AddA nuclease domain is required for chi fragment generation; this subunit has the helicase and 3' -&gt; 5' nuclease activities. The chain is ATP-dependent helicase/nuclease subunit A from Staphylococcus aureus (strain MW2).